A 421-amino-acid chain; its full sequence is MSDNGPQNQRSAPRITFGGPTDSTDNNQDGGRSGARPKQRRPQGLPNNTASWFTALTQHGKEELRFPRGQGVPINTNSGKDDQIGYYRRATRRVRGGDGKMKELSPRWYFYYLGTGPEASLPYGANKEGIVWVATEGALNTPKDHIGTRNPNNNAAIVLQLPQGTTLPKGFYAEGSRGGSQASSRSSSRSRGNSRNSTPGSSRGNSPARMASGGGETALALLLLDRLNQLESKVSGRSQQQQGQTVTKKSAAEASKKPRQKRTATKQYNVTQAFGRRGPEQTQGNFGDQELIRQGTDYKHWPQIAQFAPSASAFFGMSRIGMEVTPSGTWLTYHGAIKLDDKDPQFKDNVILLNKHIDAYKIFPPTEPKKDKKKKTDEAQPLPQRQKKQPTVTLLPAADMDDFSRQLQNSMSGASADSTQA.

Composition is skewed to polar residues over residues 1–11 (MSDNGPQNQRS) and 21–30 (TDSTDNNQDG). A disordered region spans residues 1–49 (MSDNGPQNQRSAPRITFGGPTDSTDNNQDGGRSGARPKQRRPQGLPNNT). The tract at residues 41–186 (RPQGLPNNTA…RGGSQASSRS (146 aa)) is RNA-binding. Residues 48–175 (NTASWFTALT…TLPKGFYAEG (128 aa)) form the CoV N NTD domain. Arg-92, Arg-107, and Arg-149 together coordinate RNA. Disordered regions lie at residues 168-213 (PKGF…MASG), 233-268 (KVSG…TKQY), and 363-421 (FPPT…STQA). A Phosphoserine; by host modification is found at Ser-176. Positions 179–206 (GSQASSRSSSRSRGNSRNSTPGSSRGNS) are enriched in low complexity. A compositionally biased stretch (polar residues) spans 233 to 248 (KVSGRSQQQQGQTVTK). A CoV N CTD domain is found at 247–364 (TKKSAAEASK…KHIDAYKIFP (118 aa)). Residues 258–361 (PRQKRTATKQ…LLNKHIDAYK (104 aa)) form a dimerization region. A compositionally biased stretch (basic and acidic residues) spans 367–378 (EPKKDKKKKTDE). The segment covering 405 to 421 (RQLQNSMSGASADSTQA) has biased composition (polar residues).

This sequence belongs to the betacoronavirus nucleocapsid protein family. Homooligomer. Both monomeric and oligomeric forms interact with RNA. Interacts with protein M. Interacts with NSP3; this interaction serves to tether the genome to the newly translated replicase-transcriptase complex at a very early stage of infection. Post-translationally, ADP-ribosylated. The ADP-ribosylation is retained in the virion during infection. Phosphorylated on serine and threonine residues.

It localises to the virion. The protein localises to the host endoplasmic reticulum-Golgi intermediate compartment. Its subcellular location is the host Golgi apparatus. In terms of biological role, packages the positive strand viral genome RNA into a helical ribonucleocapsid (RNP) and plays a fundamental role during virion assembly through its interactions with the viral genome and membrane protein M. Plays an important role in enhancing the efficiency of subgenomic viral RNA transcription as well as viral replication. This chain is Nucleoprotein, found in Bat coronavirus Rp3/2004 (BtCoV/Rp3/2004).